The primary structure comprises 399 residues: Fructose-1,6-bisphosphate aldolase/phosphatase (399 aa).

The active-site Proton acceptor; for FBP phosphatase activity is D11. Mg(2+)-binding residues include D11, H18, D52, and D53. H18 is a beta-D-fructose 1,6-bisphosphate binding site. H18 provides a ligand contact to dihydroxyacetone phosphate. Residue Y91 participates in beta-D-fructose 1,6-bisphosphate binding. Q95 serves as a coordination point for Mg(2+). 104-105 provides a ligand contact to beta-D-fructose 1,6-bisphosphate; sequence GN. Position 132 (D132) interacts with Mg(2+). A beta-D-fructose 1,6-bisphosphate-binding site is contributed by K133. Dihydroxyacetone phosphate is bound at residue K133. Residue Y229 is the Proton donor/acceptor; for FBP aldolase activity of the active site. K232, D233, and D234 together coordinate Mg(2+). The active-site Schiff-base intermediate with DHAP; for FBP aldolase activity is the K232. Residues 242-243, R266, D297, and Y358 contribute to the beta-D-fructose 1,6-bisphosphate site; that span reads QS. Residues R266 and D297 each contribute to the dihydroxyacetone phosphate site.

It belongs to the FBP aldolase/phosphatase family. In terms of assembly, homooctamer; dimer of tetramers. Mg(2+) is required as a cofactor.

The enzyme catalyses beta-D-fructose 1,6-bisphosphate + H2O = beta-D-fructose 6-phosphate + phosphate. The catalysed reaction is beta-D-fructose 1,6-bisphosphate = D-glyceraldehyde 3-phosphate + dihydroxyacetone phosphate. It functions in the pathway carbohydrate biosynthesis; gluconeogenesis. Its function is as follows. Catalyzes two subsequent steps in gluconeogenesis: the aldol condensation of dihydroxyacetone phosphate (DHAP) and glyceraldehyde-3-phosphate (GA3P) to fructose-1,6-bisphosphate (FBP), and the dephosphorylation of FBP to fructose-6-phosphate (F6P). The sequence is that of Fructose-1,6-bisphosphate aldolase/phosphatase from Pyrobaculum neutrophilum (strain DSM 2338 / JCM 9278 / NBRC 100436 / V24Sta) (Thermoproteus neutrophilus).